The sequence spans 68 residues: MMFRLTSVSCFLLVIVCLNLFQVVLTRRCVPPSRYCTRHRPCCRGTCCSGLCRPMCNLWYGKRATFQE.

Positions 1–26 (MMFRLTSVSCFLLVIVCLNLFQVVLT) are cleaved as a signal peptide. 4 cysteine pairs are disulfide-bonded: C29–C43, C36–C48, C42–C52, and C47–C56. The residue at position 60 (Y60) is a Tyrosine amide. The propeptide occupies 64 to 68 (ATFQE).

The protein belongs to the conotoxin I2 superfamily. Expressed by the venom duct.

Its subcellular location is the secreted. In Conus striatus (Striated cone), this protein is conotoxin S11.3.